A 25-amino-acid polypeptide reads, in one-letter code: Ocellatin-L1 (25 aa).

The residue at position 25 (Leu-25) is a Leucine amide.

The protein belongs to the frog skin active peptide (FSAP) family. Ocellatin subfamily. In terms of tissue distribution, expressed by the skin glands.

It localises to the secreted. Antimicrobial peptide with activity against Gram-negative bacteria but without activity against Gram-positive bacteria. Shows a low activity in stimulating insulin release from rat BRIN-BD11 beta cells, and acts without loss of integrity of the plasma membrane. Has very low hemolytic activity. Shows weak amphipathicity in its alpha-helical conformation. This is Ocellatin-L1 from Leptodactylus laticeps (Santa Fe frog).